A 156-amino-acid chain; its full sequence is Small ribosomal subunit protein uS7 (156 aa).

This sequence belongs to the universal ribosomal protein uS7 family. Part of the 30S ribosomal subunit. Contacts proteins S9 and S11.

In terms of biological role, one of the primary rRNA binding proteins, it binds directly to 16S rRNA where it nucleates assembly of the head domain of the 30S subunit. Is located at the subunit interface close to the decoding center, probably blocks exit of the E-site tRNA. The polypeptide is Small ribosomal subunit protein uS7 (Streptomyces griseus subsp. griseus (strain JCM 4626 / CBS 651.72 / NBRC 13350 / KCC S-0626 / ISP 5235)).